The sequence spans 437 residues: Aromatic peroxidase fscJ (437 aa).

The first 19 residues, 1 to 19 (MKWLHLLSVVACVADEVYA), serve as a signal peptide directing secretion. Heme is bound at residue Cys-83.

Belongs to the chloroperoxidase family. Requires heme b as cofactor.

Its pathway is secondary metabolite biosynthesis. In terms of biological role, aromatic peroxidase; part of the fragmented gene cluster that mediates the biosynthesis of fusarochromene, a tryptophan-derived metabolite closely related to a group of mycotoxins including fusarochromanone. The role of fscJ within the pathway has not been identified yet. The first step of the pathway is the epimerization of L-tryptophan to D-tryptophan in the presence of the NRPS-like tryptophan epimerase fscC. D-tryptophan is subsequently hydroxylated by the tryptophan 6-hydroxylase fscE to yield 6-hydroxytryptophan. The pyrrole ring undergoes cleavaged by the tryptophan 2,3-dioxygenase fscD and is finally converted to 4-hydroxykyrunenine by the hydrolase fscH. The NRPS-like oxidoreductase fscA reduces the carboxyl group to primary alcohol and the DMATS-type prenyltransferase fscG performs prenylation, followed by the formation of a chromene ring catalyzed by the oxidoreductase fscI, which leads to desacetylfusarochromene. Epoxidation by fscF and rearrangement reactions of chromene double bonds convert compound desacetylfusarochromene to fusarochromanones. Although specific acetyltransferases were not found near the fsc gene cluster, several predicted enzymes containing the N-acetyltransferase superfamily domain are present in the genome of F.equiseti. These predicted enzymes may have the potential to convert desacetylfusarochromene to fusarochromene. In Fusarium equiseti (Fusarium scirpi), this protein is Aromatic peroxidase fscJ.